Reading from the N-terminus, the 894-residue chain is Alanine--tRNA ligase (894 aa).

Zn(2+)-binding residues include His569, His573, Cys683, and His687.

It belongs to the class-II aminoacyl-tRNA synthetase family. Zn(2+) serves as cofactor.

Its subcellular location is the cytoplasm. It catalyses the reaction tRNA(Ala) + L-alanine + ATP = L-alanyl-tRNA(Ala) + AMP + diphosphate. Functionally, catalyzes the attachment of alanine to tRNA(Ala) in a two-step reaction: alanine is first activated by ATP to form Ala-AMP and then transferred to the acceptor end of tRNA(Ala). Also edits incorrectly charged Ser-tRNA(Ala) and Gly-tRNA(Ala) via its editing domain. This is Alanine--tRNA ligase from Chloroflexus aurantiacus (strain ATCC 29366 / DSM 635 / J-10-fl).